The chain runs to 55 residues: Large ribosomal subunit protein bL33 (55 aa).

Belongs to the bacterial ribosomal protein bL33 family.

The chain is Large ribosomal subunit protein bL33 from Dinoroseobacter shibae (strain DSM 16493 / NCIMB 14021 / DFL 12).